The primary structure comprises 947 residues: Glutamate receptor 2.8 (947 aa).

The first 26 residues, 1–26 (MNPKKNNNTFLSYFVCLFLLLEVGLG), serve as a signal peptide directing secretion. The Extracellular segment spans residues 27–577 (QNQISEIKVG…NTWVFLKPWG (551 aa)). 8 N-linked (GlcNAc...) asparagine glycosylation sites follow: Asn42, Asn118, Asn333, Asn341, Asn348, Asn420, Asn478, and Asn524. The helical transmembrane segment at 578-598 (LDLWVTTACFFVLIGFVVWLF) threads the bilayer. The Cytoplasmic portion of the chain corresponds to 599–607 (EHRVNTDFR). The chain crosses the membrane as a helical span at residues 608 to 628 (GPPHHQIGTSFWFSFSTMVFA). The Cytoplasmic portion of the chain corresponds to 629 to 632 (HREK). The helical transmembrane segment at 633–653 (VVSNLARFVVVVWCFVVLVLT) threads the bilayer. At 654-819 (QSYTANLTSF…NRLSLRSFWG (166 aa)) the chain is on the extracellular side. Asn659, Asn704, Asn723, and Asn779 each carry an N-linked (GlcNAc...) asparagine glycan. A helical transmembrane segment spans residues 820–840 (LFLIAGIASFLALLIFVFLFL). The Cytoplasmic segment spans residues 841-947 (YENRHTLCDD…ESDIECVVEQ (107 aa)).

It belongs to the glutamate-gated ion channel (TC 1.A.10.1) family. In terms of assembly, may form heteromers. In terms of tissue distribution, expressed predominantly in leaves.

The protein localises to the membrane. Functionally, glutamate-gated receptor that probably acts as a non-selective cation channel. May be involved in light-signal transduction and calcium homeostasis via the regulation of calcium influx into cells. The protein is Glutamate receptor 2.8 (GLR2.8) of Arabidopsis thaliana (Mouse-ear cress).